Here is a 96-residue protein sequence, read N- to C-terminus: MPNIKSAKKRVRVSEKRRLRNKAYKTFFKNRIKEVLKAIENKEPKEVVLELTRKAQAAIDKAVSKRVIHKNQGARRKARLFEKVNEYLRTLETTQE.

It belongs to the bacterial ribosomal protein bS20 family.

Functionally, binds directly to 16S ribosomal RNA. The protein is Small ribosomal subunit protein bS20 of Thermotoga petrophila (strain ATCC BAA-488 / DSM 13995 / JCM 10881 / RKU-1).